Consider the following 541-residue polypeptide: NEDD8-activating enzyme E1 regulatory subunit (541 aa).

Belongs to the ubiquitin-activating E1 family. ULA1 subfamily. In terms of assembly, heterodimer of uba-3 and ula-1. The complex binds NEDD8 and ubc-12.

It functions in the pathway protein modification; protein neddylation. Its function is as follows. Regulatory subunit of the dimeric uba-3-ula-1 E1 enzyme. E1 activates NEDD8 by first adenylating its C-terminal glycine residue with ATP, thereafter linking this residue to the side chain of the catalytic cysteine, yielding a NEDD8-rfl-1 (uba-3) thioester and free AMP. E1 finally transfers NEDD8 to the catalytic cysteine of ubc-12. Required for rfl-1 (uba-3) nuclear localization during early embryonic development. The sequence is that of NEDD8-activating enzyme E1 regulatory subunit (ula-1) from Caenorhabditis elegans.